The following is a 784-amino-acid chain: Probable phosphoketolase (784 aa).

Belongs to the XFP family. Requires thiamine diphosphate as cofactor.

The chain is Probable phosphoketolase from Rhodopseudomonas palustris (strain HaA2).